The chain runs to 238 residues: Ribosomal RNA small subunit methyltransferase G (238 aa).

Residues Gly78, Phe83, 129–130 (AE), and Arg148 each bind S-adenosyl-L-methionine. The segment at 216-238 (EKKKETPKKYPRKAGTPAKNPIK) is disordered.

Belongs to the methyltransferase superfamily. RNA methyltransferase RsmG family.

Its subcellular location is the cytoplasm. Its function is as follows. Specifically methylates the N7 position of a guanine in 16S rRNA. The protein is Ribosomal RNA small subunit methyltransferase G of Lactococcus lactis subsp. lactis (strain IL1403) (Streptococcus lactis).